We begin with the raw amino-acid sequence, 239 residues long: LRRN4 C-terminal-like protein (239 aa).

The N-terminal stretch at 1-19 (MLGSLSLLWLAAMTTSLVS) is a signal peptide. The Extracellular segment spans residues 20 to 194 (QPQILTLEDY…KFIMPPKPVT (175 aa)). One can recognise a Fibronectin type-III domain in the interval 82–179 (QPEPPRLGEV…EGPENWTGPS (98 aa)). N-linked (GlcNAc...) asparagine glycans are attached at residues Asn-132 and Asn-174. A helical membrane pass occupies residues 195-215 (LVYAAVGVGTALALLSCAALV). Over 216–239 (WHFCLRERWGCPRRQGMAQASEAL) the chain is Cytoplasmic.

It is found in the membrane. The polypeptide is LRRN4 C-terminal-like protein (Lrrn4cl) (Mus musculus (Mouse)).